The chain runs to 463 residues: Retinoic acid receptor RXR-gamma (463 aa).

Residues Met1 to Ile138 are modulating. Residues Gly16 to Pro53 form a disordered region. 2 NR C4-type zinc fingers span residues Cys139–Cys159 and Cys175–Cys199. The segment at residues Cys139–Met204 is a DNA-binding region (nuclear receptor). The interval Lys205 to Ser230 is hinge. The span at Glu211–Ser222 shows a compositional bias: basic and acidic residues. A disordered region spans residues Glu211–Glu232. The NR LBD domain occupies His231 to Pro459.

This sequence belongs to the nuclear hormone receptor family. NR2 subfamily. In terms of assembly, homodimer. Heterodimer with a RAR molecule. Binds DNA preferentially as a RAR/RXR heterodimer. Interacts with RARA. In terms of processing, acetylated by EP300.

It localises to the nucleus. The protein resides in the cytoplasm. Receptor for retinoic acid. Retinoic acid receptors bind as heterodimers to their target response elements in response to their ligands, all-trans or 9-cis retinoic acid, and regulate gene expression in various biological processes. The RAR/RXR heterodimers bind to the retinoic acid response elements (RARE) composed of tandem 5'-AGGTCA-3' sites known as DR1-DR5. The high affinity ligand for RXRs is 9-cis retinoic acid. The sequence is that of Retinoic acid receptor RXR-gamma (Rxrg) from Mus musculus (Mouse).